Reading from the N-terminus, the 477-residue chain is 3-isopropylmalate dehydratase large subunit (477 aa).

3 residues coordinate [4Fe-4S] cluster: cysteine 352, cysteine 413, and cysteine 416.

It belongs to the aconitase/IPM isomerase family. LeuC type 1 subfamily. Heterodimer of LeuC and LeuD. [4Fe-4S] cluster is required as a cofactor.

It catalyses the reaction (2R,3S)-3-isopropylmalate = (2S)-2-isopropylmalate. Its pathway is amino-acid biosynthesis; L-leucine biosynthesis; L-leucine from 3-methyl-2-oxobutanoate: step 2/4. In terms of biological role, catalyzes the isomerization between 2-isopropylmalate and 3-isopropylmalate, via the formation of 2-isopropylmaleate. The chain is 3-isopropylmalate dehydratase large subunit from Pseudomonas putida (strain GB-1).